Here is a 294-residue protein sequence, read N- to C-terminus: HTH-type transcriptional regulator XapR (294 aa).

The HTH lysR-type domain occupies 7–64; sequence TDLKLLRYFLAVAEELHFGRAAARLNMSQPPLSIHIKELENQLGTQLFIRHSRSVVLT. Positions 24–43 form a DNA-binding region, H-T-H motif; the sequence is FGRAAARLNMSQPPLSIHIK.

This sequence belongs to the LysR transcriptional regulatory family.

Positive regulator required for the expression of xapA and xapB. Binds to the inducer xanthosine. This is HTH-type transcriptional regulator XapR (xapR) from Escherichia coli (strain K12).